The following is a 256-amino-acid chain: Small ribosomal subunit protein eS1 (256 aa).

A2 is modified (N-acetylalanine; partial).

It belongs to the eukaryotic ribosomal protein eS1 family. In terms of assembly, component of the small ribosomal subunit. Mature ribosomes consist of a small (40S) and a large (60S) subunit. The 40S subunit contains about 33 different proteins and 1 molecule of RNA (18S). The 60S subunit contains about 49 different proteins and 3 molecules of RNA (25S, 5.8S and 5S).

Its subcellular location is the cytoplasm. This is Small ribosomal subunit protein eS1 from Eremothecium gossypii (strain ATCC 10895 / CBS 109.51 / FGSC 9923 / NRRL Y-1056) (Yeast).